Reading from the N-terminus, the 356-residue chain is Phosphoribosylformylglycinamidine cyclo-ligase (356 aa).

This sequence belongs to the AIR synthase family.

Its subcellular location is the cytoplasm. It catalyses the reaction 2-formamido-N(1)-(5-O-phospho-beta-D-ribosyl)acetamidine + ATP = 5-amino-1-(5-phospho-beta-D-ribosyl)imidazole + ADP + phosphate + H(+). It participates in purine metabolism; IMP biosynthesis via de novo pathway; 5-amino-1-(5-phospho-D-ribosyl)imidazole from N(2)-formyl-N(1)-(5-phospho-D-ribosyl)glycinamide: step 2/2. The chain is Phosphoribosylformylglycinamidine cyclo-ligase from Rhizobium meliloti (strain 1021) (Ensifer meliloti).